Consider the following 433-residue polypeptide: Tol-Pal system protein TolB (433 aa).

A signal peptide spans 1 to 21 (MRNLLRGMLVVICCMAGIAAA).

It belongs to the TolB family. As to quaternary structure, the Tol-Pal system is composed of five core proteins: the inner membrane proteins TolA, TolQ and TolR, the periplasmic protein TolB and the outer membrane protein Pal. They form a network linking the inner and outer membranes and the peptidoglycan layer.

The protein resides in the periplasm. Part of the Tol-Pal system, which plays a role in outer membrane invagination during cell division and is important for maintaining outer membrane integrity. The sequence is that of Tol-Pal system protein TolB from Pseudomonas fluorescens (strain SBW25).